A 206-amino-acid polypeptide reads, in one-letter code: Flavin reductase (NADPH) (206 aa).

The NADP(+) site is built by Gly-10, Thr-12, Gly-13, Thr-15, Arg-35, Ser-38, and Arg-39. Ser-42 bears the Phosphoserine mark. Residues Asp-54, Val-55, Leu-75, and Gly-76 each contribute to the NADP(+) site. Ser-82 is modified (phosphoserine). NADP(+)-binding residues include Met-87, Cys-109, His-132, His-153, and Ile-154. The active-site S-nitroso-cysteine intermediate; for S-nitroso-CoA-dependent nitrosyltransferase activity is the Cys-109. Catalysis depends on Cys-188, which acts as the S-nitroso-cysteine intermediate; for S-nitroso-CoA-dependent nitrosyltransferase activity.

Belongs to the BLVRB family. In terms of assembly, monomer.

Its subcellular location is the cytoplasm. It carries out the reaction reduced riboflavin + NADP(+) = riboflavin + NADPH + 2 H(+). It catalyses the reaction bilirubin IXbeta + NADP(+) = biliverdin IXbeta + NADPH + H(+). The enzyme catalyses FMNH2 + NAD(+) = FMN + NADH + 2 H(+). The catalysed reaction is FMNH2 + NADP(+) = FMN + NADPH + 2 H(+). It carries out the reaction S-nitroso-CoA + L-cysteinyl-[protein] = S-nitroso-L-cysteinyl-[protein] + CoA. It catalyses the reaction L-cysteinyl-[SCAN] + S-nitroso-CoA = S-nitroso-L-cysteinyl-[SCAN] + CoA. The enzyme catalyses S-nitroso-L-cysteinyl-[SCAN] + L-cysteinyl-[protein] = L-cysteinyl-[SCAN] + S-nitroso-L-cysteinyl-[protein]. In terms of biological role, enzyme that can both act as a NAD(P)H-dependent reductase and a S-nitroso-CoA-dependent nitrosyltransferase. Promotes fetal heme degradation during development. Also expressed in adult tissues, where it acts as a regulator of hematopoiesis, intermediary metabolism (glutaminolysis, glycolysis, TCA cycle and pentose phosphate pathway) and insulin signaling. Has a broad specificity oxidoreductase activity by catalyzing the NAD(P)H-dependent reduction of a variety of flavins, such as riboflavin, FAD or FMN, biliverdins, methemoglobin and PQQ (pyrroloquinoline quinone). Contributes to fetal heme catabolism by catalyzing reduction of biliverdin IXbeta into bilirubin IXbeta in the liver. Biliverdin IXbeta, which constitutes the major heme catabolite in the fetus is not present in adult. Does not reduce bilirubin IXalpha. Can also reduce the complexed Fe(3+) iron to Fe(2+) in the presence of FMN and NADPH. Acts as a protein nitrosyltransferase by catalyzing nitrosylation of cysteine residues of target proteins, such as HMOX2, INSR and IRS1. S-nitroso-CoA-dependent nitrosyltransferase activity is mediated via a 'ping-pong' mechanism: BLVRB first associates with both S-nitroso-CoA and protein substrate, nitric oxide group is then transferred from S-nitroso-CoA to Cys-109 and Cys-188 residues of BLVRB and from S-nitroso-BLVRB to the protein substrate. Inhibits insulin signaling by mediating nitrosylation of INSR and IRS1, leading to their inhibition. This chain is Flavin reductase (NADPH) (Blvrb), found in Mus musculus (Mouse).